We begin with the raw amino-acid sequence, 445 residues long: Secretin receptor (445 aa).

The N-terminal stretch at 1 to 21 (MCPRPGPPLGLWLLLGFACAA) is a signal peptide. The Extracellular segment spans residues 22–137 (HLVGAPPRLC…HERQHAYLLK (116 aa)). 3 disulfides stabilise this stretch: cysteine 44-cysteine 71, cysteine 62-cysteine 103, and cysteine 85-cysteine 119. 4 N-linked (GlcNAc...) asparagine glycosylation sites follow: asparagine 68, asparagine 96, asparagine 102, and asparagine 124. Residues 138 to 163 (LKVMYTVGYSSSLVMLLVALGILCAF) traverse the membrane as a helical segment. Over 164 to 170 (RRLHCTR) the chain is Cytoplasmic. Residues 171 to 191 (NYIHMHLFLSFILRALSNFIK) form a helical membrane-spanning segment. At 192-212 (DAVLFSSDDAIHCDAHRVGCK) the chain is on the extracellular side. An intrachain disulfide couples cysteine 211 to cysteine 281. A helical transmembrane segment spans residues 213-235 (LVMVFFQYCIMANYAWLLVEGLY). The Cytoplasmic segment spans residues 236–250 (LHSLLVVSFFSERKC). A helical transmembrane segment spans residues 251–272 (LQGFVVLGWGSPAMFVTSWAVT). Residues 273 to 287 (RHFLEDSGCWDINAN) lie on the Extracellular side of the membrane. A helical transmembrane segment spans residues 288 to 311 (AAIWWVIRGPVILSILINFILFIN). The Cytoplasmic portion of the chain corresponds to 312-336 (ILRILTRKLRTQETRGQDMNHYKRL). The chain crosses the membrane as a helical span at residues 337-352 (ARSTLLLIPLFGVHYI). The Extracellular segment spans residues 353–363 (VFVFSPEGAME). A helical membrane pass occupies residues 364 to 387 (IQLFFELALGSFQGLVVAVLYCFL). The Cytoplasmic portion of the chain corresponds to 388-445 (NGEVQLEVQKKWQQWHLWEPPLCPVALSSSFSNGTSSLNSTKACPSGRSRDTCKVSII).

The protein belongs to the G-protein coupled receptor 2 family. Phosphorylated on Ser and Thr residues at the cytoplasmic C-terminus by G protein-coupled receptor kinases (GRKs).

It localises to the cell membrane. The protein localises to the basolateral cell membrane. In terms of biological role, g protein-coupled receptor activated by secretin (SCT), which is involved in different processes such as regulation of the pH of the duodenal content, food intake and water homeostasis. Ligand binding causes a conformation change that triggers signaling via guanine nucleotide-binding proteins (G proteins) and activates cAMP-dependent pathway. Upon binding to secretin, regulates the pH of the duodenum by (1) inhibiting the secretion of gastric acid from the parietal cells of the stomach and (2) stimulating the production of bicarbonate (NaHCO(3)) from the ductal cells of the pancreas. In addition to regulating the pH of the duodenal content, plays a central role in diet induced thermogenesis: acts as a non-sympathetic brown fat (BAT) activator mediating prandial thermogenesis, which consequentially induces satiation. Mechanistically, secretin released by the gut after a meal binds to secretin receptor (SCTR) in brown adipocytes, activating brown fat thermogenesis by stimulating lipolysis, which is sensed in the brain and promotes satiation. Also able to stimulate lipolysis in white adipocytes. Also plays an important role in cellular osmoregulation by regulating renal water reabsorption. Also plays a role in the central nervous system: required for synaptic plasticity. In Oryctolagus cuniculus (Rabbit), this protein is Secretin receptor (SCTR).